Consider the following 84-residue polypeptide: Cell division topological specificity factor (84 aa).

This sequence belongs to the MinE family.

Prevents the cell division inhibition by proteins MinC and MinD at internal division sites while permitting inhibition at polar sites. This ensures cell division at the proper site by restricting the formation of a division septum at the midpoint of the long axis of the cell. This Granulibacter bethesdensis (strain ATCC BAA-1260 / CGDNIH1) protein is Cell division topological specificity factor.